Here is a 338-residue protein sequence, read N- to C-terminus: Nicotinate-nucleotide--dimethylbenzimidazole phosphoribosyltransferase (338 aa).

The Proton acceptor role is filled by glutamate 305.

Belongs to the CobT family.

The catalysed reaction is 5,6-dimethylbenzimidazole + nicotinate beta-D-ribonucleotide = alpha-ribazole 5'-phosphate + nicotinate + H(+). It participates in nucleoside biosynthesis; alpha-ribazole biosynthesis; alpha-ribazole from 5,6-dimethylbenzimidazole: step 1/2. Functionally, catalyzes the synthesis of alpha-ribazole-5'-phosphate from nicotinate mononucleotide (NAMN) and 5,6-dimethylbenzimidazole (DMB). In Rhizobium leguminosarum bv. trifolii (strain WSM2304), this protein is Nicotinate-nucleotide--dimethylbenzimidazole phosphoribosyltransferase.